The following is a 529-amino-acid chain: Probable cytochrome P450 6t1 (529 aa).

Cys-472 is a binding site for heme.

The protein belongs to the cytochrome P450 family. The cofactor is heme.

The protein resides in the endoplasmic reticulum membrane. It localises to the microsome membrane. May be involved in the metabolism of insect hormones and in the breakdown of synthetic insecticides. The protein is Probable cytochrome P450 6t1 (Cyp6t1) of Drosophila melanogaster (Fruit fly).